The following is a 349-amino-acid chain: MIINSLKRFGITTGAAASAAAKAAVIGLLNKEKRSTVVIPTPIGLRLEIPVEKVEIDSEISCAEVKKFSGDNPDILDGLVIRCCAKLNENNEIVIIGERGVGKVTRSGLKATMGEMAISPTVREMIINAIREVTDKGIQITIEVPNGETIAEKTLNKMVGIVGGISILGTTGIETPVSDDDYLEHIRCELNVIRQSYDYVVIAPGNSAAKYAAELFDSNCIIKVGDRIGDSIKLASNLFKKVILAGLPAKLLKVYAGIFNTHYSQGDARLESLTHASVLAGLPYGTLTKISNALSVEEAFTYMTKEQRRKVMNIVAEKILSRIKSFNDNINFCVIIFDYDGESLSRVGC.

It belongs to the CbiD family.

The catalysed reaction is Co-precorrin-5B + S-adenosyl-L-methionine = Co-precorrin-6A + S-adenosyl-L-homocysteine. Its pathway is cofactor biosynthesis; adenosylcobalamin biosynthesis; cob(II)yrinate a,c-diamide from sirohydrochlorin (anaerobic route): step 6/10. In terms of biological role, catalyzes the methylation of C-1 in cobalt-precorrin-5B to form cobalt-precorrin-6A. This is Cobalt-precorrin-5B C(1)-methyltransferase from Saccharolobus solfataricus (strain ATCC 35092 / DSM 1617 / JCM 11322 / P2) (Sulfolobus solfataricus).